A 219-amino-acid chain; its full sequence is Ribose-5-phosphate isomerase A (219 aa).

Substrate contacts are provided by residues 28-31 (SGST), 81-84 (DGAD), and 94-97 (KGGG). Residue E103 is the Proton acceptor of the active site. K121 contributes to the substrate binding site.

It belongs to the ribose 5-phosphate isomerase family. As to quaternary structure, homodimer.

It carries out the reaction aldehydo-D-ribose 5-phosphate = D-ribulose 5-phosphate. It participates in carbohydrate degradation; pentose phosphate pathway; D-ribose 5-phosphate from D-ribulose 5-phosphate (non-oxidative stage): step 1/1. In terms of biological role, catalyzes the reversible conversion of ribose-5-phosphate to ribulose 5-phosphate. The polypeptide is Ribose-5-phosphate isomerase A (Actinobacillus pleuropneumoniae serotype 3 (strain JL03)).